A 283-amino-acid chain; its full sequence is 2-heptyl-4(1H)-quinolone synthase subunit PqsB (283 aa).

This sequence belongs to the thiolase-like superfamily. FabH family. As to quaternary structure, forms a tight complex with PqsC.

The protein resides in the cytoplasm. Its activity is regulated as follows. Activity of the complex is inhibited by 2-aminoacetophenone (2-AA). Required for the biosynthesis of the quorum-sensing signaling molecules 2-heptyl-4(1H)-quinolone (HHQ) and 2-heptyl-3-hydroxy-4(1H)-quinolone (Pseudomonas quinolone signal or PQS), which are important for biofilm formation and virulence. The PqsC/PqsB complex catalyzes the condensation of 2-aminobenzoylacetate (2-ABA) and octanoyl-CoA to form HHQ. PqsB, together with PqsC, catalyzes the coupling of 2-ABA with the octanoate group, leading to decarboxylation and dehydration, and resulting in closure of the quinoline ring. PqsB is probably required for the proper folding of PqsC rather than for a direct enzymatic role in the process. The protein is 2-heptyl-4(1H)-quinolone synthase subunit PqsB of Pseudomonas aeruginosa (strain ATCC 15692 / DSM 22644 / CIP 104116 / JCM 14847 / LMG 12228 / 1C / PRS 101 / PAO1).